Reading from the N-terminus, the 308-residue chain is Glycine--tRNA ligase alpha subunit (308 aa).

This sequence belongs to the class-II aminoacyl-tRNA synthetase family. As to quaternary structure, tetramer of two alpha and two beta subunits.

The protein localises to the cytoplasm. The catalysed reaction is tRNA(Gly) + glycine + ATP = glycyl-tRNA(Gly) + AMP + diphosphate. The sequence is that of Glycine--tRNA ligase alpha subunit from Streptococcus pyogenes serotype M3 (strain SSI-1).